Here is a 269-residue protein sequence, read N- to C-terminus: Ubiquinone/menaquinone biosynthesis C-methyltransferase UbiE (269 aa).

S-adenosyl-L-methionine is bound by residues threonine 92, aspartate 113, and 141 to 142 (NA).

The protein belongs to the class I-like SAM-binding methyltransferase superfamily. MenG/UbiE family.

The enzyme catalyses a 2-demethylmenaquinol + S-adenosyl-L-methionine = a menaquinol + S-adenosyl-L-homocysteine + H(+). The catalysed reaction is a 2-methoxy-6-(all-trans-polyprenyl)benzene-1,4-diol + S-adenosyl-L-methionine = a 5-methoxy-2-methyl-3-(all-trans-polyprenyl)benzene-1,4-diol + S-adenosyl-L-homocysteine + H(+). It participates in quinol/quinone metabolism; menaquinone biosynthesis; menaquinol from 1,4-dihydroxy-2-naphthoate: step 2/2. Its pathway is cofactor biosynthesis; ubiquinone biosynthesis. In terms of biological role, methyltransferase required for the conversion of demethylmenaquinol (DMKH2) to menaquinol (MKH2) and the conversion of 2-polyprenyl-6-methoxy-1,4-benzoquinol (DDMQH2) to 2-polyprenyl-3-methyl-6-methoxy-1,4-benzoquinol (DMQH2). The chain is Ubiquinone/menaquinone biosynthesis C-methyltransferase UbiE from Brucella melitensis biotype 2 (strain ATCC 23457).